Reading from the N-terminus, the 336-residue chain is F420-dependent glucose-6-phosphate dehydrogenase (336 aa).

Aspartate 40 provides a ligand contact to coenzyme F420-(gamma-Glu)n. The active-site Proton donor is histidine 41. Coenzyme F420-(gamma-Glu)n-binding positions include threonine 77 and 108-109 (TG). Glutamate 110 (proton acceptor) is an active-site residue. Residues asparagine 113, 176 to 177 (SG), and 179 to 180 (AA) each bind coenzyme F420-(gamma-Glu)n. Positions 194, 197, 258, and 282 each coordinate substrate.

The protein belongs to the F420-dependent glucose-6-phosphate dehydrogenase family. As to quaternary structure, homodimer.

The catalysed reaction is oxidized coenzyme F420-(gamma-L-Glu)(n) + D-glucose 6-phosphate + H(+) = 6-phospho-D-glucono-1,5-lactone + reduced coenzyme F420-(gamma-L-Glu)(n). Catalyzes the coenzyme F420-dependent oxidation of glucose 6-phosphate (G6P) to 6-phosphogluconolactone. This chain is F420-dependent glucose-6-phosphate dehydrogenase, found in Microbacterium testaceum (strain StLB037).